The following is a 553-amino-acid chain: Phosphoglucomutase (553 aa).

Residues 1-24 (MQATVKRYPTTPISGQTMGTSGLR) form a disordered region. Residues 11–20 (TPISGQTMGT) are compositionally biased toward polar residues. Residues Thr20, Arg24, 117–118 (SH), and Lys131 each bind substrate. Ser117 serves as the catalytic Phosphoserine intermediate. Ser117 contacts Mg(2+). Asp289, Asp291, and Asp293 together coordinate Mg(2+). Substrate-binding positions include 293–294 (DR), Thr352, 371–373 (EES), Lys384, and Arg509.

This sequence belongs to the phosphohexose mutase family. Requires Mg(2+) as cofactor.

The protein localises to the cytoplasm. The catalysed reaction is alpha-D-glucose 1-phosphate = alpha-D-glucose 6-phosphate. Its function is as follows. This enzyme participates in both the breakdown and synthesis of glucose. This Entamoeba dispar protein is Phosphoglucomutase (pgm).